Consider the following 140-residue polypeptide: Aspartate 1-decarboxylase (140 aa).

The Schiff-base intermediate with substrate; via pyruvic acid role is filled by S25. Residue S25 is modified to Pyruvic acid (Ser). T57 serves as a coordination point for substrate. Residue Y58 is the Proton donor of the active site. Residue 73–75 (GAA) coordinates substrate.

The protein belongs to the PanD family. As to quaternary structure, heterooctamer of four alpha and four beta subunits. Pyruvate serves as cofactor. In terms of processing, is synthesized initially as an inactive proenzyme, which is activated by self-cleavage at a specific serine bond to produce a beta-subunit with a hydroxyl group at its C-terminus and an alpha-subunit with a pyruvoyl group at its N-terminus.

The protein resides in the cytoplasm. It catalyses the reaction L-aspartate + H(+) = beta-alanine + CO2. The protein operates within cofactor biosynthesis; (R)-pantothenate biosynthesis; beta-alanine from L-aspartate: step 1/1. Catalyzes the pyruvoyl-dependent decarboxylation of aspartate to produce beta-alanine. The chain is Aspartate 1-decarboxylase from Persephonella marina (strain DSM 14350 / EX-H1).